We begin with the raw amino-acid sequence, 545 residues long: Glucose-6-phosphate isomerase (545 aa).

Catalysis depends on Glu-349, which acts as the Proton donor. Residues His-380 and Lys-509 contribute to the active site.

This sequence belongs to the GPI family.

It is found in the cytoplasm. The enzyme catalyses alpha-D-glucose 6-phosphate = beta-D-fructose 6-phosphate. It participates in carbohydrate biosynthesis; gluconeogenesis. It functions in the pathway carbohydrate degradation; glycolysis; D-glyceraldehyde 3-phosphate and glycerone phosphate from D-glucose: step 2/4. Catalyzes the reversible isomerization of glucose-6-phosphate to fructose-6-phosphate. The protein is Glucose-6-phosphate isomerase of Chelativorans sp. (strain BNC1).